The chain runs to 223 residues: DNA mismatch repair protein MutH (223 aa).

It belongs to the MutH family.

The protein localises to the cytoplasm. Sequence-specific endonuclease that cleaves unmethylated GATC sequences. It is involved in DNA mismatch repair. This Haemophilus influenzae (strain ATCC 51907 / DSM 11121 / KW20 / Rd) protein is DNA mismatch repair protein MutH.